The following is a 367-amino-acid chain: 2-aminoethylphosphonate--pyruvate transaminase (367 aa).

Pyridoxal 5'-phosphate contacts are provided by residues 65-67, Tyr-92, Thr-143, and Asp-168; that span reads SGS. Lys-194 is subject to N6-(pyridoxal phosphate)lysine. Thr-243 lines the pyridoxal 5'-phosphate pocket.

This sequence belongs to the class-V pyridoxal-phosphate-dependent aminotransferase family. PhnW subfamily. As to quaternary structure, homodimer. It depends on pyridoxal 5'-phosphate as a cofactor.

It catalyses the reaction (2-aminoethyl)phosphonate + pyruvate = phosphonoacetaldehyde + L-alanine. In terms of biological role, involved in phosphonate degradation. The polypeptide is 2-aminoethylphosphonate--pyruvate transaminase (phnW) (Salmonella typhimurium (strain LT2 / SGSC1412 / ATCC 700720)).